The sequence spans 152 residues: Nucleoside diphosphate kinase (152 aa).

Positions 11, 59, 87, 93, 104, and 114 each coordinate ATP. His-117 acts as the Pros-phosphohistidine intermediate in catalysis.

The protein belongs to the NDK family. As to quaternary structure, homotetramer. Mg(2+) is required as a cofactor.

It localises to the cytoplasm. It carries out the reaction a 2'-deoxyribonucleoside 5'-diphosphate + ATP = a 2'-deoxyribonucleoside 5'-triphosphate + ADP. The enzyme catalyses a ribonucleoside 5'-diphosphate + ATP = a ribonucleoside 5'-triphosphate + ADP. Its function is as follows. Major role in the synthesis of nucleoside triphosphates other than ATP. The ATP gamma phosphate is transferred to the NDP beta phosphate via a ping-pong mechanism, using a phosphorylated active-site intermediate. In Prochlorococcus marinus subsp. pastoris (strain CCMP1986 / NIES-2087 / MED4), this protein is Nucleoside diphosphate kinase.